A 184-amino-acid polypeptide reads, in one-letter code: Tumor necrosis factor alpha-induced protein 8-like protein 2 (184 aa).

S3 carries the phosphoserine modification.

It belongs to the TNFAIP8 family. TNFAIP8L2 subfamily. In terms of assembly, may interact with CASP8; however, such result is unclear since could not reproduce the interaction with CASP8. Interacts with RAC1. Phosphorylated by TAK1/MAP3K7; this phosphorylation triggers association with BTRC and subsequent ubiquitination and degradation. In terms of processing, ubiquitinated in a BTRC-depdent manner; leading to degradation mediated through the proteasome pathway.

It is found in the cytoplasm. The protein localises to the nucleus. The protein resides in the lysosome. In terms of biological role, acts as a negative regulator of innate and adaptive immunity by maintaining immune homeostasis. Plays a regulatory role in the Toll-like signaling pathway by determining the strength of LPS-induced signaling and gene expression. Inhibits TCR-mediated T-cell activation and negatively regulate T-cell function to prevent hyperresponsiveness. Also inhibits autolysosome formation via negatively modulating MTOR activation by interacting with RAC1 and promoting the disassociation of the RAC1-MTOR complex. Plays an essential role in NK-cell biology by acting as a checkpoint and displaying an expression pattern correlating with NK-cell maturation process and by negatively regulating NK-cell maturation and antitumor immunity. Mechanistically, suppresses IL-15-triggered mTOR activity in NK-cells. This Oryctolagus cuniculus (Rabbit) protein is Tumor necrosis factor alpha-induced protein 8-like protein 2 (TNFAIP8L2).